A 211-amino-acid polypeptide reads, in one-letter code: Uridine kinase (211 aa).

Residue 12–19 (GGSGSGKT) coordinates ATP.

This sequence belongs to the uridine kinase family.

Its subcellular location is the cytoplasm. The enzyme catalyses uridine + ATP = UMP + ADP + H(+). It catalyses the reaction cytidine + ATP = CMP + ADP + H(+). It functions in the pathway pyrimidine metabolism; CTP biosynthesis via salvage pathway; CTP from cytidine: step 1/3. The protein operates within pyrimidine metabolism; UMP biosynthesis via salvage pathway; UMP from uridine: step 1/1. The polypeptide is Uridine kinase (Bacillus velezensis (strain DSM 23117 / BGSC 10A6 / LMG 26770 / FZB42) (Bacillus amyloliquefaciens subsp. plantarum)).